The sequence spans 935 residues: MGDVYVTSPTFVGHDTGSILAIDCHPSGKKFITCGQKARTSNGLVVVWNAEPVLDKKKASNENVPKLLFQVESQSQSNSCRWSPDGKRFAFGSDDSSVSVWEYVGLINSMGSITGGAQNVERYKECCVLRGHSMEVLTVEWSPNGKYLASGSIDYRIIIYNARKLPDRITVLNDIQLPVKGLSWDPIGKYLASLEGDKKLRFWATDSWQCVKSVTEPFESNIEETMLTRLDWSPDGKYLMTPAAVRSGKPLIKLIQRQTWKSDQFLAGHHKGTTCVRAMPRLIEANLKNGKRMQLTCAAVGSRDKSISIWVFPGTLKPLFVINNIFNHTVMDFAWCGRNLLACSQDGTVKVIHLSESVIGEMISNEAMSDLCYQIYSIRPPRYELTDKEEDESQDSFNLSDLSSSANNASFVTCPEDVLIKRKKLVAAQQSSDIQLTKSMEDNSKENESKNSEKTMMEERNKQIDVRKDGKRRIQPVFCGTTTADPMTSLSSEGKKTVAPPPAKRKALAPAVPAKKGEVDLEDSSDSDDDDEEEEEDMEISDIESVRNKKRKVPATTSQPMLALDLKKPALRPMEPKSLKTQEGTVLMEAPEQQPKLSQHVVDRKGMFVEIDNRWKHGGVETTQIKLIKKKQQTAENEDDMMDGERRVNHECLWMAVLGSPVIIVAANKHNVVLGCGDKCLRVYRTFCGTHIVSLRLDSLPVLIGVTEHAAYALTENGRLSTWNLKLGKAVVTRQPLFDCVEASTDNSLISADVSETGVPLIVFSNGSIFTFNVSLSCWIQAITTNVLGRLTSPISDAQLSCSNGTTNSAGPLVRLLKRMRKQATAPGVAPQVVKAVKESQLEQLLHCAEQLGNPQDYQTMLMLYVETLCEGGSEKKLKNILNDLSRSGAPMQVCGLRRSALYDDVTRMIKLKQPAIAARIVAGVAASTTTKSLF.

WD repeat units lie at residues 14 to 58, 72 to 111, 131 to 170, 174 to 213, 222 to 261, 277 to 320, and 325 to 362; these read HDTG…DKKK, ESQSQSNSCRWSPDGKRFAFGSDDSSVSVWEYVGLINSMG, GHSMEVLTVEWSPNGKYLASGSIDYRIIIYNARKLPDRIT, DIQLPVKGLSWDPIGKYLASLEGDKKLRFWATDSWQCVKS, IEETMLTRLDWSPDGKYLMTPAAVRSGKPLIKLIQRQTWK, RAMP…KPLF, and IFNHTVMDFAWCGRNLLACSQDGTVKVIHLSESVIGEM. The segment at 431–556 is disordered; the sequence is SSDIQLTKSM…RNKKRKVPAT (126 aa). A compositionally biased stretch (basic and acidic residues) spans 439–468; that stretch reads SMEDNSKENESKNSEKTMMEERNKQIDVRK. The segment covering 480–492 has biased composition (polar residues); that stretch reads GTTTADPMTSLSS. Positions 520 to 542 are enriched in acidic residues; sequence DLEDSSDSDDDDEEEEEDMEISD.

The protein belongs to the WD repeat HIR1 family.

It is found in the nucleus. In terms of biological role, required for replication-independent chromatin assembly and for the periodic repression of histone gene transcription during the cell cycle. The polypeptide is Protein HIRA (Caenorhabditis elegans).